Here is a 362-residue protein sequence, read N- to C-terminus: Chorismate synthase (362 aa).

Arginine 48 is a binding site for NADP(+). Residues 131–133, 243–244, glycine 288, 303–307, and arginine 329 contribute to the FMN site; these read RAS, NA, and KPTSS.

Belongs to the chorismate synthase family. Homotetramer. FMNH2 serves as cofactor.

It carries out the reaction 5-O-(1-carboxyvinyl)-3-phosphoshikimate = chorismate + phosphate. The protein operates within metabolic intermediate biosynthesis; chorismate biosynthesis; chorismate from D-erythrose 4-phosphate and phosphoenolpyruvate: step 7/7. Its function is as follows. Catalyzes the anti-1,4-elimination of the C-3 phosphate and the C-6 proR hydrogen from 5-enolpyruvylshikimate-3-phosphate (EPSP) to yield chorismate, which is the branch point compound that serves as the starting substrate for the three terminal pathways of aromatic amino acid biosynthesis. This reaction introduces a second double bond into the aromatic ring system. This Bartonella tribocorum (strain CIP 105476 / IBS 506) protein is Chorismate synthase.